The primary structure comprises 404 residues: Histidinol dehydrogenase (404 aa).

NAD(+) is bound by residues Tyr114, Gln176, and Asn199. Ser222, Gln244, and His247 together coordinate substrate. Positions 244 and 247 each coordinate Zn(2+). Active-site proton acceptor residues include Glu300 and His301. Residues His301, Asp334, Glu388, and His393 each coordinate substrate. Asp334 contributes to the Zn(2+) binding site. Position 393 (His393) interacts with Zn(2+).

The protein belongs to the histidinol dehydrogenase family. It depends on Zn(2+) as a cofactor.

The catalysed reaction is L-histidinol + 2 NAD(+) + H2O = L-histidine + 2 NADH + 3 H(+). The protein operates within amino-acid biosynthesis; L-histidine biosynthesis; L-histidine from 5-phospho-alpha-D-ribose 1-diphosphate: step 9/9. Functionally, catalyzes the sequential NAD-dependent oxidations of L-histidinol to L-histidinaldehyde and then to L-histidine. The sequence is that of Histidinol dehydrogenase (hisD) from Archaeoglobus fulgidus (strain ATCC 49558 / DSM 4304 / JCM 9628 / NBRC 100126 / VC-16).